A 304-amino-acid polypeptide reads, in one-letter code: uncharacterized protein (304 aa).

The protein belongs to the mimivirus L137 family.

This is an uncharacterized protein from Acanthamoeba polyphaga mimivirus (APMV).